Consider the following 59-residue polypeptide: Large ribosomal subunit protein bL32c (59 aa).

The tract at residues 37–59 is disordered; sequence SRSFSSGNEHPKPKGFSGQQANK.

This sequence belongs to the bacterial ribosomal protein bL32 family.

The protein localises to the plastid. It is found in the chloroplast. The polypeptide is Large ribosomal subunit protein bL32c (Saccharum hybrid (Sugarcane)).